We begin with the raw amino-acid sequence, 640 residues long: Threonine--tRNA ligase (640 aa).

Residues 1-61 (MPVITLPDGS…SNDATLQIIT (61 aa)) enclose the TGS domain. Positions 242-533 (DHRKIGKQLD…LIEHYAGVFP (292 aa)) are catalytic. Residues Cys-333, His-384, and His-510 each coordinate Zn(2+).

This sequence belongs to the class-II aminoacyl-tRNA synthetase family. Homodimer. Zn(2+) serves as cofactor.

It is found in the cytoplasm. The catalysed reaction is tRNA(Thr) + L-threonine + ATP = L-threonyl-tRNA(Thr) + AMP + diphosphate + H(+). In terms of biological role, catalyzes the attachment of threonine to tRNA(Thr) in a two-step reaction: L-threonine is first activated by ATP to form Thr-AMP and then transferred to the acceptor end of tRNA(Thr). Also edits incorrectly charged L-seryl-tRNA(Thr). This Pseudomonas putida (strain ATCC 47054 / DSM 6125 / CFBP 8728 / NCIMB 11950 / KT2440) protein is Threonine--tRNA ligase.